We begin with the raw amino-acid sequence, 767 residues long: AMP deaminase 3 (767 aa).

2 positions are modified to phosphoserine: S85 and S107. 2 disordered regions span residues 89-111 and 181-205; these read QMPPQQDWKGPPAASPAMSPTTP and LGHPRADTAPPEEGLPDFHPPPLPQ. H317 and H319 together coordinate Zn(2+). Residues H319 and 388–393 each bind substrate; that span reads KFNSKY. A Zn(2+)-binding site is contributed by H586. E589 contributes to the substrate binding site. The active-site Proton acceptor is the H608. D663 serves as a coordination point for Zn(2+). 664–667 is a binding site for substrate; it reads DPMQ.

Belongs to the metallo-dependent hydrolases superfamily. Adenosine and AMP deaminases family. As to quaternary structure, homotetramer. Zn(2+) is required as a cofactor.

It catalyses the reaction AMP + H2O + H(+) = IMP + NH4(+). It participates in purine metabolism; IMP biosynthesis via salvage pathway; IMP from AMP: step 1/1. Its function is as follows. AMP deaminase plays a critical role in energy metabolism. This Homo sapiens (Human) protein is AMP deaminase 3.